The following is a 745-amino-acid chain: MATPRLTRNSQQQNRISQGSNSRQTTLLDWKVKDKAGNSKSVLEESSSLEDSNHADDQTEDALQTAVEYFQKGPKKASLSKDSVLEKHLKTVENVAWNNGLAPEAIDILLNVALSGKFGNALSTRILKCMIPETHISEDSVVKAVSWLCVGKCSGNTKVLFYRWLVAMFDFIDHKKQINSLYGFFFVSLQDDTLCPYVCHLLYLLTKKENVKPFRARKLLDLQAKMGMQPHLQALLSLYKFFAPTLISVSLPVRKKIFFNNSKNLWTPALLAVKLRNQGIFPEPLKLQLGPTSGRSLKRKWNYHSVIPAVNSAKKECREKMSLFDYLSNDRSLPVEQLQSFPQLLENIHCLELPSQMSSVLNSSLLLHYVNCVKDESILLRLSYWLSQTLQEECVWYNMNDYQQEKEFINFLDMVIRVQCFLQEGFYSCEAFLYKSLPLWDGFSCRSQFLKLLAWIPFSSFSEIKPLLLDHLAPLFFTSSIYFKCSLLQCLKDLLQNWLLWLSTEAQVQPMTDSPLETTLGGSMDSVSQLIEYIGWLSMVAIRLESSSTLLVHFILDFYEKVCDIYINYDLPLVVLFPPVVFHSAFLSLDATILNQLCYIMYRYRDNLTAAKKKDLVQKAKSEFSISSKICKEFNYYLTALVHCLWSSRPFETGVYIDPQIIENTGETQYKHNLNFVHHPCLLNYAASFLLQESPEEMPVHLSSIRGKKWNWYLDHLYSEGFQGLNLFIKSSIDHSSVSKTEKNT.

Polar residues predominate over residues 1-27; that stretch reads MATPRLTRNSQQQNRISQGSNSRQTTL. Residues 1-58 form a disordered region; the sequence is MATPRLTRNSQQQNRISQGSNSRQTTLLDWKVKDKAGNSKSVLEESSSLEDSNHADDQ. Residues 39 to 50 are compositionally biased toward low complexity; sequence SKSVLEESSSLE.

This sequence belongs to the CENP-I/CTF3 family. In terms of assembly, component of the CENPA-CAD complex, composed of CENPI, CENPK, CENPL, CENPO, CENPP, CENPQ, CENPR and CENPS. The CENPA-CAD complex interacts with the CENPA-NAC complex, at least composed of CENPA, CENPC, CENPH, CENPM, CENPN, CENPT and CENPU. Interacts with SENP6. In terms of processing, sumoylated. Sumoylated form can be polyubiquitinated by RNF4, leading to its degradation. Desumoylation by SENP6 prevents its degradation. In terms of tissue distribution, highly expressed in testis, ovary and spleen. A much lower mRNA level is found in brain and lung, and no expression is detected in liver, kidney, heart, muscle, pituitary gland, prostate, epididymis and seminal vesicle.

The protein resides in the nucleus. The protein localises to the chromosome. It is found in the centromere. In terms of biological role, component of the CENPA-CAD (nucleosome distal) complex, a complex recruited to centromeres which is involved in assembly of kinetochore proteins, mitotic progression and chromosome segregation. May be involved in incorporation of newly synthesized CENPA into centromeres via its interaction with the CENPA-NAC complex. Required for the localization of CENPF, MAD1L1 and MAD2 (MAD2L1 or MAD2L2) to kinetochores. Involved in the response of gonadal tissues to follicle-stimulating hormone. The protein is Centromere protein I (Cenpi) of Rattus norvegicus (Rat).